A 795-amino-acid polypeptide reads, in one-letter code: Protocadherin beta-5 (795 aa).

Positions 1–30 (METALAKTPQKRQVMFLAILLLLWEAGSEA) are cleaved as a signal peptide. Over 31-689 (VRYSIPEETE…AQADSLTVYL (659 aa)) the chain is Extracellular. Cadherin domains are found at residues 35-133 (IPEE…SPEF), 138-242 (MLLK…APEF), 247-346 (YEVQ…APEL), 351-450 (LSSP…APAF), and 455-560 (YTLF…SPFV). N169 is a glycosylation site (N-linked (GlcNAc...) asparagine). K296 bears the N6-acetyllysine mark. Residues N417 and N435 are each glycosylated (N-linked (GlcNAc...) asparagine). N-linked (GlcNAc...) asparagine glycosylation occurs at N566. The Cadherin 6 domain maps to 567 to 670 (GSAPCTELVP…LVDGFSQPYL (104 aa)). Residues 690–710 (VVALASVSSLFLFSVLLFVAV) traverse the membrane as a helical segment. The Cytoplasmic portion of the chain corresponds to 711-795 (RLCRRSRAAP…AAFRNSFGLN (85 aa)).

The protein resides in the cell membrane. Potential calcium-dependent cell-adhesion protein. May be involved in the establishment and maintenance of specific neuronal connections in the brain. This Pan troglodytes (Chimpanzee) protein is Protocadherin beta-5 (PCDHB5).